The chain runs to 323 residues: Viral cathepsin (323 aa).

The signal sequence occupies residues 1–16; that stretch reads MNKILFYLFVYGVVNS. A propeptide spans 17–112 (activation peptide); that stretch reads AAYDLLKAPN…IVLDQPPGKG (96 aa). Intrachain disulfides connect Cys133-Cys174, Cys167-Cys207, and Cys262-Cys310. The active site involves Cys136. Asn158 carries an N-linked (GlcNAc...) asparagine; by host glycan. Active-site residues include His269 and Asn289.

Belongs to the peptidase C1 family. As to quaternary structure, interacts with chitinase/CHIA; this interaction maintains VCATH in the host endoplasmic reticulum. Synthesized as an inactive proenzyme and activated by proteolytic removal of the inhibitory propeptide.

It localises to the host endoplasmic reticulum. It catalyses the reaction Endopeptidase of broad specificity, hydrolyzing substrates of both cathepsin L and cathepsin B.. Cysteine protease that plays an essential role in host liquefaction to facilitate horizontal transmission of the virus. Accumulates within infected cells as an inactive proenzyme (proV-CATH), which is activated by proteolytic cleavage upon cell death. This Lepidoptera (butterflies and moths) protein is Viral cathepsin (VCATH).